A 570-amino-acid chain; its full sequence is Adenine deaminase (570 aa).

Belongs to the metallo-dependent hydrolases superfamily. Adenine deaminase family. It depends on Mn(2+) as a cofactor.

The catalysed reaction is adenine + H2O + H(+) = hypoxanthine + NH4(+). The polypeptide is Adenine deaminase (Clostridium acetobutylicum (strain ATCC 824 / DSM 792 / JCM 1419 / IAM 19013 / LMG 5710 / NBRC 13948 / NRRL B-527 / VKM B-1787 / 2291 / W)).